The chain runs to 525 residues: Probable bifunctional tRNA threonylcarbamoyladenosine biosynthesis protein (525 aa).

The interval 1 to 322 (MPEKRVLGIE…FRSDQVEVTW (322 aa)) is kae1. 3 residues coordinate Fe cation: histidine 106, histidine 110, and tyrosine 127. Residues 127–131 (YASGA), aspartate 159, glycine 172, glutamate 176, and asparagine 255 each bind L-threonylcarbamoyladenylate. Aspartate 283 contacts Fe cation. Residues 331–525 (APGQSETAER…HEIELRGRYL (195 aa)) enclose the Protein kinase domain. ATP-binding positions include 338-346 (AERGAEASV) and lysine 355. Aspartate 442 (proton acceptor; for kinase activity) is an active-site residue.

In the N-terminal section; belongs to the KAE1 / TsaD family. The protein in the C-terminal section; belongs to the protein kinase superfamily. Tyr protein kinase family. BUD32 subfamily. In terms of assembly, component of the KEOPS complex that consists of Kae1, Bud32, Cgi121 and Pcc1; the whole complex dimerizes. It depends on Fe(2+) as a cofactor.

The protein localises to the cytoplasm. It carries out the reaction L-seryl-[protein] + ATP = O-phospho-L-seryl-[protein] + ADP + H(+). It catalyses the reaction L-threonyl-[protein] + ATP = O-phospho-L-threonyl-[protein] + ADP + H(+). The catalysed reaction is L-threonylcarbamoyladenylate + adenosine(37) in tRNA = N(6)-L-threonylcarbamoyladenosine(37) in tRNA + AMP + H(+). Functionally, required for the formation of a threonylcarbamoyl group on adenosine at position 37 (t(6)A37) in tRNAs that read codons beginning with adenine. Is a component of the KEOPS complex that is probably involved in the transfer of the threonylcarbamoyl moiety of threonylcarbamoyl-AMP (TC-AMP) to the N6 group of A37. The Kae1 domain likely plays a direct catalytic role in this reaction. The Bud32 domain probably displays kinase activity that regulates Kae1 function. This chain is Probable bifunctional tRNA threonylcarbamoyladenosine biosynthesis protein, found in Methanocorpusculum labreanum (strain ATCC 43576 / DSM 4855 / Z).